We begin with the raw amino-acid sequence, 530 residues long: GATA zinc finger domain-containing protein 4 (530 aa).

Disordered stretches follow at residues 1 to 27 and 212 to 386; these read MSIN…FWDN and STVV…INNN. Low complexity-rich tracts occupy residues 7 to 17, 216 to 290, and 299 to 386; these read NNNKNNNNKNN, SNSP…FNNN, and NSNN…INNN. The GATA-type zinc finger occupies 494-518; sequence CSMCNIKESISWIKTMVNGQLCNAC.

In Dictyostelium discoideum (Social amoeba), this protein is GATA zinc finger domain-containing protein 4 (gtaD).